The primary structure comprises 352 residues: UDP-N-acetylglucosamine--N-acetylmuramyl-(pentapeptide) pyrophosphoryl-undecaprenol N-acetylglucosamine transferase 3 (352 aa).

UDP-N-acetyl-alpha-D-glucosamine-binding positions include 11 to 13 (SAG), Arg164, Ser194, and Gln289.

It belongs to the glycosyltransferase 28 family. MurG subfamily.

Its subcellular location is the cell membrane. It carries out the reaction di-trans,octa-cis-undecaprenyl diphospho-N-acetyl-alpha-D-muramoyl-L-alanyl-D-glutamyl-meso-2,6-diaminopimeloyl-D-alanyl-D-alanine + UDP-N-acetyl-alpha-D-glucosamine = di-trans,octa-cis-undecaprenyl diphospho-[N-acetyl-alpha-D-glucosaminyl-(1-&gt;4)]-N-acetyl-alpha-D-muramoyl-L-alanyl-D-glutamyl-meso-2,6-diaminopimeloyl-D-alanyl-D-alanine + UDP + H(+). It functions in the pathway cell wall biogenesis; peptidoglycan biosynthesis. Functionally, cell wall formation. Catalyzes the transfer of a GlcNAc subunit on undecaprenyl-pyrophosphoryl-MurNAc-pentapeptide (lipid intermediate I) to form undecaprenyl-pyrophosphoryl-MurNAc-(pentapeptide)GlcNAc (lipid intermediate II). This is UDP-N-acetylglucosamine--N-acetylmuramyl-(pentapeptide) pyrophosphoryl-undecaprenol N-acetylglucosamine transferase 3 from Bacillus thuringiensis (strain Al Hakam).